A 268-amino-acid chain; its full sequence is Tryptophan synthase alpha chain (268 aa).

Active-site proton acceptor residues include E49 and D60.

Belongs to the TrpA family. As to quaternary structure, tetramer of two alpha and two beta chains.

The catalysed reaction is (1S,2R)-1-C-(indol-3-yl)glycerol 3-phosphate + L-serine = D-glyceraldehyde 3-phosphate + L-tryptophan + H2O. The protein operates within amino-acid biosynthesis; L-tryptophan biosynthesis; L-tryptophan from chorismate: step 5/5. Functionally, the alpha subunit is responsible for the aldol cleavage of indoleglycerol phosphate to indole and glyceraldehyde 3-phosphate. The chain is Tryptophan synthase alpha chain from Yersinia pestis bv. Antiqua (strain Antiqua).